A 394-amino-acid chain; its full sequence is Phosphoglycerate kinase (394 aa).

Residues D21 to N23, R36, H60 to N63, R114, and R147 each bind substrate. ATP-binding positions include K198, E315, and G341–T344.

The protein belongs to the phosphoglycerate kinase family. As to quaternary structure, monomer.

Its subcellular location is the cytoplasm. It carries out the reaction (2R)-3-phosphoglycerate + ATP = (2R)-3-phospho-glyceroyl phosphate + ADP. The protein operates within carbohydrate degradation; glycolysis; pyruvate from D-glyceraldehyde 3-phosphate: step 2/5. This is Phosphoglycerate kinase from Wigglesworthia glossinidia brevipalpis.